The primary structure comprises 890 residues: Alanine--tRNA ligase (890 aa).

4 residues coordinate Zn(2+): H564, H568, C677, and H681.

Belongs to the class-II aminoacyl-tRNA synthetase family. Zn(2+) serves as cofactor.

The protein resides in the cytoplasm. The enzyme catalyses tRNA(Ala) + L-alanine + ATP = L-alanyl-tRNA(Ala) + AMP + diphosphate. In terms of biological role, catalyzes the attachment of alanine to tRNA(Ala) in a two-step reaction: alanine is first activated by ATP to form Ala-AMP and then transferred to the acceptor end of tRNA(Ala). Also edits incorrectly charged Ser-tRNA(Ala) and Gly-tRNA(Ala) via its editing domain. In Rhodopseudomonas palustris (strain BisB18), this protein is Alanine--tRNA ligase.